The sequence spans 161 residues: Allophycocyanin alpha chain (161 aa).

N4-methylasparagine is present on Asn71. Cys81 provides a ligand contact to (2R,3E)-phycocyanobilin.

The protein belongs to the phycobiliprotein family. In terms of assembly, heterodimer of an alpha and a beta chain. In terms of processing, contains one covalently linked phycocyanobilin chromophore.

The protein resides in the cellular thylakoid membrane. Light-harvesting photosynthetic bile pigment-protein from the phycobiliprotein complex. Allophycocyanin has a maximum absorption at approximately 650 nanometers. This chain is Allophycocyanin alpha chain (apcA), found in Synechocystis sp. (strain PCC 6714) (Aphanocapsa sp. (strain PCC 6714)).